An 87-amino-acid chain; its full sequence is Small ribosomal subunit protein uS17 (87 aa).

It belongs to the universal ribosomal protein uS17 family. As to quaternary structure, part of the 30S ribosomal subunit.

Functionally, one of the primary rRNA binding proteins, it binds specifically to the 5'-end of 16S ribosomal RNA. This chain is Small ribosomal subunit protein uS17, found in Bacillus licheniformis (strain ATCC 14580 / DSM 13 / JCM 2505 / CCUG 7422 / NBRC 12200 / NCIMB 9375 / NCTC 10341 / NRRL NRS-1264 / Gibson 46).